Here is a 469-residue protein sequence, read N- to C-terminus: Spliceosome-associated protein CWC27 homolog (469 aa).

Serine 2 is subject to N-acetylserine. The 156-residue stretch at 11 to 166 folds into the PPIase cyclophilin-type domain; the sequence is TNGKVLLKTT…NPHRIKSCEV (156 aa). Positions 175–193 are enriched in basic and acidic residues; sequence TPREIKKPKNEKPEEEVKK. Disordered stretches follow at residues 175 to 415 and 428 to 469; these read TPRE…DDEG and RKVK…KERR. A coiled-coil region spans residues 206–229; sequence SFGEEAEEEEEEVNRVSQSMKGRS. Basic and acidic residues predominate over residues 231–241; sequence SSHDLLKDDPH. The span at 256–278 shows a compositional bias: acidic residues; it reads TGDLEDDGEDDSAERDEYMEDDE. 2 stretches are compositionally biased toward basic and acidic residues: residues 302–341 and 356–368; these read GDGE…KVEE and EYRR…EALR. The stretch at 309–371 forms a coiled coil; it reads ASRSEELRKE…QKYEALRKQQ (63 aa). Positions 384-403 are enriched in polar residues; it reads ALLSQFKSKLTQAITETPEN. A compositionally biased stretch (basic and acidic residues) spans 454–469; it reads RREESKKLLREKKERR.

The protein belongs to the cyclophilin-type PPIase family. In terms of assembly, part of the activated spliceosome B/catalytic step 1 spliceosome, one of the forms of the spliceosome which has a well-formed active site but still cannot catalyze the branching reaction and is composed at least of 52 proteins, the U2, U5 and U6 snRNAs and the pre-mRNA. Recruited during early steps of activated spliceosome B maturation, it is probably one of the first proteins released from this complex as he matures to the spliceosome C complex. Component of the minor spliceosome, which splices U12-type introns.

The protein localises to the nucleus. Its function is as follows. As part of the spliceosome, plays a role in pre-mRNA splicing. Probable inactive PPIase with no peptidyl-prolyl cis-trans isomerase activity. As a component of the minor spliceosome, involved in the splicing of U12-type introns in pre-mRNAs. This Mus musculus (Mouse) protein is Spliceosome-associated protein CWC27 homolog.